A 145-amino-acid polypeptide reads, in one-letter code: Protein BUD31 homolog 1 (145 aa).

The protein belongs to the BUD31 (G10) family.

The protein localises to the nucleus. This is Protein BUD31 homolog 1 from Oryza sativa subsp. japonica (Rice).